The primary structure comprises 148 residues: MRAVIQRVKKSWVEVDGKVVGSINEGLNVFLGVRKGDTEEDIEKLVNKILNLRIFEDERGKFQYSVLDIKGEILVVSQFTLYANVKKGRRPSFEEAEEPKRAKELYEKFVDKIKESGLKVETGIFGAMMDVFIENWGPVTIIIDSREI.

Positions 137-138 (GP) match the Gly-cisPro motif, important for rejection of L-amino acids motif.

The protein belongs to the DTD family. In terms of assembly, homodimer.

Its subcellular location is the cytoplasm. The catalysed reaction is glycyl-tRNA(Ala) + H2O = tRNA(Ala) + glycine + H(+). It catalyses the reaction a D-aminoacyl-tRNA + H2O = a tRNA + a D-alpha-amino acid + H(+). Functionally, an aminoacyl-tRNA editing enzyme that deacylates mischarged D-aminoacyl-tRNAs. Also deacylates mischarged glycyl-tRNA(Ala), protecting cells against glycine mischarging by AlaRS. Acts via tRNA-based rather than protein-based catalysis; rejects L-amino acids rather than detecting D-amino acids in the active site. By recycling D-aminoacyl-tRNA to D-amino acids and free tRNA molecules, this enzyme counteracts the toxicity associated with the formation of D-aminoacyl-tRNA entities in vivo and helps enforce protein L-homochirality. The protein is D-aminoacyl-tRNA deacylase of Aquifex aeolicus (strain VF5).